A 241-amino-acid chain; its full sequence is Sugar fermentation stimulation protein homolog (241 aa).

This sequence belongs to the SfsA family.

This Thermosynechococcus vestitus (strain NIES-2133 / IAM M-273 / BP-1) protein is Sugar fermentation stimulation protein homolog.